The following is an 81-amino-acid chain: Photosystem I iron-sulfur center (81 aa).

2 consecutive 4Fe-4S ferredoxin-type domains span residues A2–R31 and I39–Y68. [4Fe-4S] cluster is bound by residues C11, C14, C17, C21, C48, C51, C54, and C58.

As to quaternary structure, the eukaryotic PSI reaction center is composed of at least 11 subunits. The cofactor is [4Fe-4S] cluster.

The protein localises to the plastid. Its subcellular location is the chloroplast thylakoid membrane. It catalyses the reaction reduced [plastocyanin] + hnu + oxidized [2Fe-2S]-[ferredoxin] = oxidized [plastocyanin] + reduced [2Fe-2S]-[ferredoxin]. Its function is as follows. Apoprotein for the two 4Fe-4S centers FA and FB of photosystem I (PSI); essential for photochemical activity. FB is the terminal electron acceptor of PSI, donating electrons to ferredoxin. The C-terminus interacts with PsaA/B/D and helps assemble the protein into the PSI complex. Required for binding of PsaD and PsaE to PSI. PSI is a plastocyanin/cytochrome c6-ferredoxin oxidoreductase, converting photonic excitation into a charge separation, which transfers an electron from the donor P700 chlorophyll pair to the spectroscopically characterized acceptors A0, A1, FX, FA and FB in turn. In Antithamnion sp. (Red alga), this protein is Photosystem I iron-sulfur center.